A 227-amino-acid chain; its full sequence is Cytochrome c oxidase subunit 2 (227 aa).

Topologically, residues 1 to 14 (MAYPFQLGLQDATS) are mitochondrial intermembrane. The helical transmembrane segment at 15 to 45 (PIMEELTNFHDHTLMIVFLISSLVLYIISLM) threads the bilayer. Residues 46–59 (LTTKLTHTSTMDAQ) lie on the Mitochondrial matrix side of the membrane. A helical membrane pass occupies residues 60–87 (EVETIWTILPAAILVLIALPSLRILYMM). Over 88–227 (DEINNPVLTV…HFENWSASMV (140 aa)) the chain is Mitochondrial intermembrane. The Cu cation site is built by His161, Cys196, Glu198, Cys200, His204, and Met207. Glu198 provides a ligand contact to Mg(2+).

It belongs to the cytochrome c oxidase subunit 2 family. In terms of assembly, component of the cytochrome c oxidase (complex IV, CIV), a multisubunit enzyme composed of 14 subunits. The complex is composed of a catalytic core of 3 subunits MT-CO1, MT-CO2 and MT-CO3, encoded in the mitochondrial DNA, and 11 supernumerary subunits COX4I, COX5A, COX5B, COX6A, COX6B, COX6C, COX7A, COX7B, COX7C, COX8 and NDUFA4, which are encoded in the nuclear genome. The complex exists as a monomer or a dimer and forms supercomplexes (SCs) in the inner mitochondrial membrane with NADH-ubiquinone oxidoreductase (complex I, CI) and ubiquinol-cytochrome c oxidoreductase (cytochrome b-c1 complex, complex III, CIII), resulting in different assemblies (supercomplex SCI(1)III(2)IV(1) and megacomplex MCI(2)III(2)IV(2)). Found in a complex with TMEM177, COA6, COX18, COX20, SCO1 and SCO2. Interacts with TMEM177 in a COX20-dependent manner. Interacts with COX20. Interacts with COX16. Requires Cu cation as cofactor.

The protein localises to the mitochondrion inner membrane. It carries out the reaction 4 Fe(II)-[cytochrome c] + O2 + 8 H(+)(in) = 4 Fe(III)-[cytochrome c] + 2 H2O + 4 H(+)(out). In terms of biological role, component of the cytochrome c oxidase, the last enzyme in the mitochondrial electron transport chain which drives oxidative phosphorylation. The respiratory chain contains 3 multisubunit complexes succinate dehydrogenase (complex II, CII), ubiquinol-cytochrome c oxidoreductase (cytochrome b-c1 complex, complex III, CIII) and cytochrome c oxidase (complex IV, CIV), that cooperate to transfer electrons derived from NADH and succinate to molecular oxygen, creating an electrochemical gradient over the inner membrane that drives transmembrane transport and the ATP synthase. Cytochrome c oxidase is the component of the respiratory chain that catalyzes the reduction of oxygen to water. Electrons originating from reduced cytochrome c in the intermembrane space (IMS) are transferred via the dinuclear copper A center (CU(A)) of subunit 2 and heme A of subunit 1 to the active site in subunit 1, a binuclear center (BNC) formed by heme A3 and copper B (CU(B)). The BNC reduces molecular oxygen to 2 water molecules using 4 electrons from cytochrome c in the IMS and 4 protons from the mitochondrial matrix. This is Cytochrome c oxidase subunit 2 (MT-CO2) from Uromys caudimaculatus (Giant white-tailed rat).